Here is a 78-residue protein sequence, read N- to C-terminus: Surfactant-associated protein 2 (78 aa).

An N-terminal signal peptide occupies residues 1 to 19 (MGSGLPLVLLLTLLGSSHG). The N-linked (GlcNAc...) asparagine glycan is linked to N37.

N-glycosylated. As to expression, predominantly expressed in lung, where it is detected in type II pneumocytes in the alveolus, and in nonciliated epithelium in bronchioli (at protein level). Also detected at lower levels in cervix, esophagus, stomach, testis and kidney.

Its subcellular location is the secreted. The protein localises to the cytoplasmic vesicle. It localises to the secretory vesicle. It is found in the golgi apparatus. Putative surfactant protein. The polypeptide is Surfactant-associated protein 2 (SFTA2) (Homo sapiens (Human)).